Here is a 640-residue protein sequence, read N- to C-terminus: Threonine--tRNA ligase (640 aa).

The region spanning 1–61 is the TGS domain; sequence MPVVTLPDGS…DKDSHLAIIT (61 aa). The segment at 242–533 is catalytic; the sequence is DHRRLGKQLD…LIENHAGNMP (292 aa). Zn(2+) contacts are provided by cysteine 333, histidine 384, and histidine 510.

It belongs to the class-II aminoacyl-tRNA synthetase family. In terms of assembly, homodimer. It depends on Zn(2+) as a cofactor.

Its subcellular location is the cytoplasm. The enzyme catalyses tRNA(Thr) + L-threonine + ATP = L-threonyl-tRNA(Thr) + AMP + diphosphate + H(+). In terms of biological role, catalyzes the attachment of threonine to tRNA(Thr) in a two-step reaction: L-threonine is first activated by ATP to form Thr-AMP and then transferred to the acceptor end of tRNA(Thr). Also edits incorrectly charged L-seryl-tRNA(Thr). This chain is Threonine--tRNA ligase, found in Polynucleobacter asymbioticus (strain DSM 18221 / CIP 109841 / QLW-P1DMWA-1) (Polynucleobacter necessarius subsp. asymbioticus).